Consider the following 208-residue polypeptide: Holliday junction branch migration complex subunit RuvA (208 aa).

The domain I stretch occupies residues 1–63 (MIGMLTGRVE…QDSVTLYGFL (63 aa)). The segment at 64–142 (DRDSKRVFLQ…LNQSDDASAG (79 aa)) is domain II. The tract at residues 143-151 (NAPYQPTVD) is flexible linker. A domain III region spans residues 151–208 (DAGVEQVVEGLVSLGWRQQDAQRAVNEACAENDVPMPLASDDAPRVLRLALARMDRGR).

This sequence belongs to the RuvA family. As to quaternary structure, homotetramer. Forms an RuvA(8)-RuvB(12)-Holliday junction (HJ) complex. HJ DNA is sandwiched between 2 RuvA tetramers; dsDNA enters through RuvA and exits via RuvB. An RuvB hexamer assembles on each DNA strand where it exits the tetramer. Each RuvB hexamer is contacted by two RuvA subunits (via domain III) on 2 adjacent RuvB subunits; this complex drives branch migration. In the full resolvosome a probable DNA-RuvA(4)-RuvB(12)-RuvC(2) complex forms which resolves the HJ.

It is found in the cytoplasm. In terms of biological role, the RuvA-RuvB-RuvC complex processes Holliday junction (HJ) DNA during genetic recombination and DNA repair, while the RuvA-RuvB complex plays an important role in the rescue of blocked DNA replication forks via replication fork reversal (RFR). RuvA specifically binds to HJ cruciform DNA, conferring on it an open structure. The RuvB hexamer acts as an ATP-dependent pump, pulling dsDNA into and through the RuvAB complex. HJ branch migration allows RuvC to scan DNA until it finds its consensus sequence, where it cleaves and resolves the cruciform DNA. The protein is Holliday junction branch migration complex subunit RuvA of Bifidobacterium longum subsp. infantis (strain ATCC 15697 / DSM 20088 / JCM 1222 / NCTC 11817 / S12).